Here is a 418-residue protein sequence, read N- to C-terminus: RapA guanosine triphosphatase-activating protein B (418 aa).

The Rap-GAP domain maps to 142–407; that stretch reads LVKVCEPEFN…EKASALINVI (266 aa). The segment at 304–339 is disordered; that stretch reads NRVVGEQPSPSLTTTTTTTTTTSPTINSNSPTPSNK. The span at 311–338 shows a compositional bias: low complexity; sequence PSPSLTTTTTTTTTTSPTINSNSPTPSN.

Functionally, mediates the deactivation of rap1 during multicellular development and is required for normal morphogenesis. Also required for the correct patterning of specific subtypes of prestalk cells. This is RapA guanosine triphosphatase-activating protein B (rapgapB) from Dictyostelium discoideum (Social amoeba).